Here is a 361-residue protein sequence, read N- to C-terminus: Uroporphyrinogen decarboxylase (361 aa).

Substrate-binding positions include 27-31 (RQAGR), Asp77, Tyr154, Thr209, and His327.

This sequence belongs to the uroporphyrinogen decarboxylase family. As to quaternary structure, homodimer.

Its subcellular location is the cytoplasm. It catalyses the reaction uroporphyrinogen III + 4 H(+) = coproporphyrinogen III + 4 CO2. It participates in porphyrin-containing compound metabolism; protoporphyrin-IX biosynthesis; coproporphyrinogen-III from 5-aminolevulinate: step 4/4. Catalyzes the decarboxylation of four acetate groups of uroporphyrinogen-III to yield coproporphyrinogen-III. The sequence is that of Uroporphyrinogen decarboxylase from Coxiella burnetii (strain RSA 331 / Henzerling II).